A 215-amino-acid polypeptide reads, in one-letter code: Ribonuclease S-6 (215 aa).

Residues 1 to 22 (MFNLPLTSVFVIFLFALSPIYG) form the signal peptide. Position 32 (Q32) interacts with RNA. C38 and C43 are joined by a disulfide. An N-linked (GlcNAc...) asparagine glycan is attached at N49. H53 is a binding site for RNA. The active-site Proton donor is H53. N-linked (GlcNAc...) asparagine glycosylation occurs at N59. C67 and C116 are oxidised to a cystine. Residues 91 to 92 (DL), R94, F105, 108 to 109 (RE), and 112 to 113 (KH) each bind RNA. E109 is an active-site residue. H113 serves as the catalytic Proton acceptor. N-linked (GlcNAc...) asparagine glycans are attached at residues N160 and N172. Disulfide bonds link C175-C204 and C187-C198.

Belongs to the RNase T2 family.

It is found in the secreted. The protein resides in the extracellular space. It catalyses the reaction a ribonucleotidyl-ribonucleotide-RNA + H2O = a 3'-end 3'-phospho-ribonucleotide-RNA + a 5'-end dephospho-ribonucleoside-RNA + H(+). Its function is as follows. Self-incompatibility (SI) is the inherited ability of a flowering plant to prevent self-fertilization by discriminating between self and non-self pollen during pollination. In many species of the Solanaceae, self-incompatibility is controlled by the single, multiallelic locus S. This stylar glycoprotein is associated with expression of self-incompatibility in potato. The sequence is that of Ribonuclease S-6 from Nicotiana alata (Winged tobacco).